A 544-amino-acid polypeptide reads, in one-letter code: Membrane protein insertase YidC (544 aa).

Helical transmembrane passes span 13 to 33, 321 to 341, 343 to 363, 409 to 429, 461 to 481, and 506 to 526; these read LSLF…SWML, LWYL…DVIP, WGLS…PLTF, LGGC…YSLV, LYFV…FTQL, and MPIM…IYWI.

Belongs to the OXA1/ALB3/YidC family. Type 1 subfamily. Interacts with the Sec translocase complex via SecD. Specifically interacts with transmembrane segments of nascent integral membrane proteins during membrane integration.

The protein resides in the cell inner membrane. Required for the insertion and/or proper folding and/or complex formation of integral membrane proteins into the membrane. Involved in integration of membrane proteins that insert both dependently and independently of the Sec translocase complex, as well as at least some lipoproteins. Aids folding of multispanning membrane proteins. The chain is Membrane protein insertase YidC from Borreliella afzelii (strain PKo) (Borrelia afzelii).